Reading from the N-terminus, the 354-residue chain is Alanine racemase (354 aa).

Lys-33 functions as the Proton acceptor; specific for D-alanine in the catalytic mechanism. Lys-33 bears the N6-(pyridoxal phosphate)lysine mark. Arg-127 contributes to the substrate binding site. Tyr-251 serves as the catalytic Proton acceptor; specific for L-alanine. Met-299 provides a ligand contact to substrate.

This sequence belongs to the alanine racemase family. It depends on pyridoxal 5'-phosphate as a cofactor.

The enzyme catalyses L-alanine = D-alanine. The protein operates within amino-acid biosynthesis; D-alanine biosynthesis; D-alanine from L-alanine: step 1/1. In terms of biological role, catalyzes the interconversion of L-alanine and D-alanine. May also act on other amino acids. The sequence is that of Alanine racemase (alr) from Fusobacterium nucleatum subsp. nucleatum (strain ATCC 25586 / DSM 15643 / BCRC 10681 / CIP 101130 / JCM 8532 / KCTC 2640 / LMG 13131 / VPI 4355).